The chain runs to 78 residues: Translational regulator CsrA (78 aa).

Belongs to the CsrA/RsmA family. Homodimer; the beta-strands of each monomer intercalate to form a hydrophobic core, while the alpha-helices form wings that extend away from the core.

Its subcellular location is the cytoplasm. Functionally, a translational regulator that binds mRNA to regulate translation initiation and/or mRNA stability. Usually binds in the 5'-UTR at or near the Shine-Dalgarno sequence preventing ribosome-binding, thus repressing translation. Its main target seems to be the major flagellin gene, while its function is anatagonized by FliW. This chain is Translational regulator CsrA, found in Desulfovibrio desulfuricans (strain ATCC 27774 / DSM 6949 / MB).